The chain runs to 96 residues: Large ribosomal subunit protein uL23 (96 aa).

It belongs to the universal ribosomal protein uL23 family. In terms of assembly, part of the 50S ribosomal subunit. Contacts protein L29, and trigger factor when it is bound to the ribosome.

Its function is as follows. One of the early assembly proteins it binds 23S rRNA. One of the proteins that surrounds the polypeptide exit tunnel on the outside of the ribosome. Forms the main docking site for trigger factor binding to the ribosome. This chain is Large ribosomal subunit protein uL23, found in Desulfovibrio desulfuricans (strain ATCC 27774 / DSM 6949 / MB).